The primary structure comprises 161 residues: Protein-export protein SecB (161 aa).

This sequence belongs to the SecB family. Homotetramer, a dimer of dimers. One homotetramer interacts with 1 SecA dimer.

The protein resides in the cytoplasm. One of the proteins required for the normal export of preproteins out of the cell cytoplasm. It is a molecular chaperone that binds to a subset of precursor proteins, maintaining them in a translocation-competent state. It also specifically binds to its receptor SecA. This is Protein-export protein SecB from Shewanella baltica (strain OS155 / ATCC BAA-1091).